The following is a 768-amino-acid chain: WD repeat-containing protein 20 homolog (768 aa).

The interval Glu-103–Pro-122 is disordered. WD repeat units follow at residues Ile-224–Asn-264, Ile-302–Val-342, Ser-345–Arg-384, and Cys-454–Gly-497. Positions Val-531–Asn-608 are disordered. Residues Asn-539–Thr-553 show a composition bias toward polar residues. Over residues Phe-570–Ser-582 the composition is skewed to low complexity. Residues Asn-595–Asn-608 are compositionally biased toward polar residues. A WD 5 repeat occupies Val-646–Arg-683. The segment at Asp-684–Val-749 is disordered. Residues Ser-688–Gly-712 show a composition bias toward polar residues. The segment covering Ser-724–Ser-733 has biased composition (low complexity). The segment covering Glu-734–Val-749 has biased composition (polar residues).

In terms of assembly, interacts with usp-46; the interaction increases the catalytic activity of usp-46 in the presence of wdr-48. Expressed in several neurons in the head and tail.

In terms of biological role, together with wdr-48, binds to and stimulates the activity of the deubiquitinating enzyme usp-46, leading to deubiquitination and stabilization of the glr-1 glutamate receptor. In Caenorhabditis elegans, this protein is WD repeat-containing protein 20 homolog.